A 244-amino-acid polypeptide reads, in one-letter code: Transforming protein v-Fos/v-Fox (244 aa).

The segment at 1 to 236 (DSLSYYHSPA…LFPASSGHSG (236 aa)) is transforming protein v-Fos. Residues 113–176 (EVKRRIRRER…EKLEFILAAH (64 aa)) form the bZIP domain. Residues 115–135 (KRRIRRERNKMAAAKCRNRRR) are basic motif. A leucine-zipper region spans residues 141 to 169 (LQAETDQLEDEKSALQTEIANLLKEKEKL). Residues 237-244 (FISMAGWQ) are transforming protein v-Fox.

This sequence belongs to the bZIP family. Fos subfamily.

The protein resides in the host nucleus. The sequence is that of Transforming protein v-Fos/v-Fox (FOS-FOX) from Mus musculus (Mouse).